Reading from the N-terminus, the 343-residue chain is Aspartate carbamoyltransferase catalytic subunit (343 aa).

Positions 91 and 92 each coordinate carbamoyl phosphate. Residue lysine 119 participates in L-aspartate binding. The carbamoyl phosphate site is built by arginine 141, histidine 171, and glutamine 174. Residues arginine 204 and arginine 259 each contribute to the L-aspartate site. Glycine 300 and proline 301 together coordinate carbamoyl phosphate.

This sequence belongs to the aspartate/ornithine carbamoyltransferase superfamily. ATCase family. As to quaternary structure, heterododecamer (2C3:3R2) of six catalytic PyrB chains organized as two trimers (C3), and six regulatory PyrI chains organized as three dimers (R2).

The catalysed reaction is carbamoyl phosphate + L-aspartate = N-carbamoyl-L-aspartate + phosphate + H(+). The protein operates within pyrimidine metabolism; UMP biosynthesis via de novo pathway; (S)-dihydroorotate from bicarbonate: step 2/3. In terms of biological role, catalyzes the condensation of carbamoyl phosphate and aspartate to form carbamoyl aspartate and inorganic phosphate, the committed step in the de novo pyrimidine nucleotide biosynthesis pathway. This Burkholderia thailandensis (strain ATCC 700388 / DSM 13276 / CCUG 48851 / CIP 106301 / E264) protein is Aspartate carbamoyltransferase catalytic subunit.